The sequence spans 197 residues: tRNA(Phe) 7-((3-amino-3-carboxypropyl)-4-demethylwyosine(37)-N(4))-methyltransferase (197 aa).

This sequence belongs to the TYW3 family.

The catalysed reaction is 4-demethyl-7-[(3S)-3-amino-3-carboxypropyl]wyosine(37) in tRNA(Phe) + S-adenosyl-L-methionine = 7-[(3S)-3-amino-3-carboxypropyl]wyosine(37) in tRNA(Phe) + S-adenosyl-L-homocysteine + H(+). S-adenosyl-L-methionine-dependent methyltransferase that acts as a component of the wyosine derivatives biosynthesis pathway. Probably methylates N-4 position of wybutosine-86 to produce wybutosine-72. This is tRNA(Phe) 7-((3-amino-3-carboxypropyl)-4-demethylwyosine(37)-N(4))-methyltransferase from Thermococcus sibiricus (strain DSM 12597 / MM 739).